Here is a 225-residue protein sequence, read N- to C-terminus: Uracil-DNA glycosylase (225 aa).

The Proton acceptor role is filled by Asp65.

The protein belongs to the uracil-DNA glycosylase (UDG) superfamily. UNG family.

It localises to the cytoplasm. The enzyme catalyses Hydrolyzes single-stranded DNA or mismatched double-stranded DNA and polynucleotides, releasing free uracil.. Excises uracil residues from the DNA which can arise as a result of misincorporation of dUMP residues by DNA polymerase or due to deamination of cytosine. In Clostridium botulinum (strain Alaska E43 / Type E3), this protein is Uracil-DNA glycosylase.